We begin with the raw amino-acid sequence, 514 residues long: Voltage-gated potassium channel regulatory subunit KCNG1 (514 aa).

At 1–224 (MTLLPGDNSD…DMVEKPHSGL (224 aa)) the chain is on the cytoplasmic side. The span at 181-196 (EREDEEEALDSEDQES) shows a compositional bias: acidic residues. The tract at residues 181–205 (EREDEEEALDSEDQESEGPSTSEGR) is disordered. A helical transmembrane segment spans residues 225–246 (PGKVFACLSVLFVTVTAVNLSV). Topologically, residues 247-267 (STLPSLREEEEQGQCSQMCHN) are extracellular. The helical transmembrane segment at 268 to 289 (VFIVESVCVGWFSLEFLLRFIQ) threads the bilayer. Residues 290–300 (APSKFAFLRSP) lie on the Cytoplasmic side of the membrane. The helical transmembrane segment at 301 to 321 (LTLIDLVAILPYYVTLLVDGA) threads the bilayer. Topologically, residues 322–338 (ASSRRKPSTGNSYLDKV) are extracellular. Residues 339–359 (GLVLRVLRALRILYVMRLARH) form a helical; Voltage-sensor membrane-spanning segment. Topologically, residues 360-374 (SLGLQTLGLTARRCT) are cytoplasmic. Residues 375–396 (REFGLLLLFLCVAIALFAPLLY) traverse the membrane as a helical segment. Over 397–411 (VIENEMADSPEFTSI) the chain is Extracellular. The helical intramembrane region spans 412–423 (PACYWWAVITMT). The Selectivity filter signature appears at 424–429 (TVGYGD). Residues 424 to 431 (TVGYGDMV) lie within the membrane without spanning it. Residues 432 to 438 (PRSTPGQ) lie on the Extracellular side of the membrane. The chain crosses the membrane as a helical span at residues 439–467 (VVALSSILSGILLMAFPVTSIFHTFSRSY). The Cytoplasmic portion of the chain corresponds to 468–514 (LELKQEQERVLIRRAQYLIKTKSQLSGMSQDSDILFGSASSDTRDNN).

Belongs to the potassium channel family. G (TC 1.A.1.2) subfamily. Kv6.1/KCNG1 sub-subfamily. As to quaternary structure, heterotetramer with KCNB1 or KCNB2.

The protein localises to the cell membrane. Its function is as follows. Regulatory alpha-subunit of the voltage-gated potassium (Kv) channel which, when coassembled with KCNB1 or KCNB2, can modulate their expression and their gating kinetics by acting on deactivation upon repolarization and inactivation during maintained depolarization. Potassium channel subunit that does not form functional channels by itself. The chain is Voltage-gated potassium channel regulatory subunit KCNG1 from Rattus norvegicus (Rat).